The sequence spans 1079 residues: BRD4-interacting chromatin-remodeling complex-associated protein-like (1079 aa).

2 disordered regions span residues 51-79 and 509-604; these read NSSN…LPLS and LHLS…TPGT. The span at 68–79 shows a compositional bias: low complexity; the sequence is LGEGPSDGLPLS. Positions 544 to 576 are enriched in polar residues; that stretch reads SSASTAHPSLGSAVQSGSSGSNFTGDQLTQPNR. The span at 590 to 604 shows a compositional bias: low complexity; sequence SSSKSTSTFSNTPGT. The residue at position 623 (Ser623) is a Phosphoserine. Disordered regions lie at residues 669–691, 837–877, and 917–954; these read EKVV…GGQK, TQFG…NHDQ, and TSEE…TESK. Basic and acidic residues-rich tracts occupy residues 918–928 and 938–952; these read SEEKASRREPL and EGHR…HGTE. Residue Ser980 is modified to Phosphoserine.

Component of the multiprotein chromatin-remodeling complexes SWI/SNF: SWI/SNF-A (BAF), SWI/SNF-B (PBAF) and related complexes. The canonical complex contains a catalytic subunit (either SMARCA4/BRG1/BAF190A or SMARCA2/BRM/BAF190B) and at least SMARCE1, ACTL6A/BAF53, SMARCC1/BAF155, SMARCC2/BAF170, and SMARCB1/SNF5/BAF47. Other subunits specific to each of the complexes may also be present permitting several possible combinations developmentally and tissue specific. Component of the SWI/SNF (GBAF) subcomplex, which includes at least BICRA or BICRAL (mutually exclusive), BRD9, SS18, the core BAF subunits, SMARCA2/BRM, SMARCA4/BRG1/BAF190A, ACTL6A/BAF53, SMARCC1/BAF155, and SMARCD1/BAF60A.

In terms of biological role, component of SWI/SNF chromatin remodeling subcomplex GBAF that carries out key enzymatic activities, changing chromatin structure by altering DNA-histone contacts within a nucleosome in an ATP-dependent manner. The polypeptide is BRD4-interacting chromatin-remodeling complex-associated protein-like (Homo sapiens (Human)).